Consider the following 609-residue polypeptide: Ataxin-10 homolog (609 aa).

Disordered stretches follow at residues 265–293 (KSTT…TTTG), 405–426 (KQQE…SKDS), and 461–490 (SDTN…KGFN). Positions 266–292 (STTESTTESTTTESTDSTTDSTTTTTT) are enriched in low complexity. Low complexity predominate over residues 466 to 479 (SSSSSSSSSSSTTT). The span at 480–490 (DGETVTSKGFN) shows a compositional bias: polar residues.

It belongs to the ATXN10 family.

May play a role in the regulation of cytokinesis. This is Ataxin-10 homolog (atxn10) from Dictyostelium discoideum (Social amoeba).